Here is a 182-residue protein sequence, read N- to C-terminus: Ribosome maturation factor RimM (182 aa).

One can recognise a PRC barrel domain in the interval glycine 102 to phenylalanine 182.

The protein belongs to the RimM family. Binds ribosomal protein uS19.

It is found in the cytoplasm. An accessory protein needed during the final step in the assembly of 30S ribosomal subunit, possibly for assembly of the head region. Essential for efficient processing of 16S rRNA. May be needed both before and after RbfA during the maturation of 16S rRNA. It has affinity for free ribosomal 30S subunits but not for 70S ribosomes. In Pectobacterium carotovorum subsp. carotovorum (strain PC1), this protein is Ribosome maturation factor RimM.